The primary structure comprises 420 residues: L-rhamnose isomerase (420 aa).

Positions 264, 296, and 298 each coordinate Mn(2+).

The protein belongs to the rhamnose isomerase family. The cofactor is Mn(2+).

It localises to the cytoplasm. The catalysed reaction is L-rhamnopyranose = L-rhamnulose. It functions in the pathway carbohydrate degradation; L-rhamnose degradation; glycerone phosphate from L-rhamnose: step 1/3. In terms of biological role, catalyzes the interconversion of L-rhamnose and L-rhamnulose. In Listeria innocua serovar 6a (strain ATCC BAA-680 / CLIP 11262), this protein is L-rhamnose isomerase.